Reading from the N-terminus, the 310-residue chain is p-hydroxybenzoic acid efflux pump subunit AaeA (310 aa).

Residues 12–32 (VITLLLVIIAIVLIFRIWVFY) traverse the membrane as a helical segment.

Belongs to the membrane fusion protein (MFP) (TC 8.A.1) family.

Its subcellular location is the cell inner membrane. Its function is as follows. Forms an efflux pump with AaeB. The polypeptide is p-hydroxybenzoic acid efflux pump subunit AaeA (Erwinia tasmaniensis (strain DSM 17950 / CFBP 7177 / CIP 109463 / NCPPB 4357 / Et1/99)).